A 177-amino-acid polypeptide reads, in one-letter code: HVA22-like protein a (177 aa).

3 consecutive transmembrane segments (helical) span residues 18 to 38, 47 to 67, and 68 to 88; these read VLAG…QAIE, QWLT…TFAK, and LIEW…WLVI.

The protein belongs to the DP1 family. Predominantly expressed in flower buds and stem.

It localises to the membrane. The chain is HVA22-like protein a (HVA22A) from Arabidopsis thaliana (Mouse-ear cress).